We begin with the raw amino-acid sequence, 261 residues long: NAD-capped RNA hydrolase NudC (261 aa).

R74 is a substrate binding site. Residues C103, C106, C121, and C124 each contribute to the Zn(2+) site. Y129 contacts substrate. In terms of domain architecture, Nudix hydrolase spans 130 to 253 (PRIFPCIIVA…TIARALIEQT (124 aa)). A163, E179, and E183 together coordinate a divalent metal cation. The short motif at 164-185 (GFVEVGETLEQCVAREVKEETG) is the Nudix box element. 197–204 (QPWAFPSS) contributes to the substrate binding site. Position 224 (E224) interacts with a divalent metal cation. A246 contributes to the substrate binding site.

Belongs to the Nudix hydrolase family. NudC subfamily. As to quaternary structure, homodimer. Requires Mg(2+) as cofactor. Mn(2+) serves as cofactor. The cofactor is Zn(2+).

It catalyses the reaction a 5'-end NAD(+)-phospho-ribonucleoside in mRNA + H2O = a 5'-end phospho-adenosine-phospho-ribonucleoside in mRNA + beta-nicotinamide D-ribonucleotide + 2 H(+). The enzyme catalyses NAD(+) + H2O = beta-nicotinamide D-ribonucleotide + AMP + 2 H(+). It carries out the reaction NADH + H2O = reduced beta-nicotinamide D-ribonucleotide + AMP + 2 H(+). Its function is as follows. mRNA decapping enzyme that specifically removes the nicotinamide adenine dinucleotide (NAD) cap from a subset of mRNAs by hydrolyzing the diphosphate linkage to produce nicotinamide mononucleotide (NMN) and 5' monophosphate mRNA. The NAD-cap is present at the 5'-end of some mRNAs and stabilizes RNA against 5'-processing. Has preference for mRNAs with a 5'-end purine. Catalyzes the hydrolysis of a broad range of dinucleotide pyrophosphates. The chain is NAD-capped RNA hydrolase NudC from Vibrio vulnificus (strain CMCP6).